Reading from the N-terminus, the 277-residue chain is Formamidopyrimidine-DNA glycosylase (277 aa).

Pro2 acts as the Schiff-base intermediate with DNA in catalysis. Glu3 acts as the Proton donor in catalysis. Lys58 acts as the Proton donor; for beta-elimination activity in catalysis. Residues His95, Arg113, and Arg158 each coordinate DNA. The FPG-type zinc finger occupies 243 to 277 (GVYDRANQPCLRCGGVVRQIRQAGRSTYYCTGCQH). The active-site Proton donor; for delta-elimination activity is the Arg267.

Belongs to the FPG family. As to quaternary structure, monomer. The cofactor is Zn(2+).

It carries out the reaction Hydrolysis of DNA containing ring-opened 7-methylguanine residues, releasing 2,6-diamino-4-hydroxy-5-(N-methyl)formamidopyrimidine.. The catalysed reaction is 2'-deoxyribonucleotide-(2'-deoxyribose 5'-phosphate)-2'-deoxyribonucleotide-DNA = a 3'-end 2'-deoxyribonucleotide-(2,3-dehydro-2,3-deoxyribose 5'-phosphate)-DNA + a 5'-end 5'-phospho-2'-deoxyribonucleoside-DNA + H(+). Functionally, involved in base excision repair of DNA damaged by oxidation or by mutagenic agents. Acts as a DNA glycosylase that recognizes and removes damaged bases. Has a preference for oxidized purines, such as 7,8-dihydro-8-oxoguanine (8-oxoG). Has AP (apurinic/apyrimidinic) lyase activity and introduces nicks in the DNA strand. Cleaves the DNA backbone by beta-delta elimination to generate a single-strand break at the site of the removed base with both 3'- and 5'-phosphates. In Dechloromonas aromatica (strain RCB), this protein is Formamidopyrimidine-DNA glycosylase.